Consider the following 462-residue polypeptide: S-alkyl-thiohydroximate lyase SUR1 (462 aa).

Belongs to the class-I pyridoxal-phosphate-dependent aminotransferase family. Requires pyridoxal 5'-phosphate as cofactor.

Its function is as follows. C-S lyase involved in glucosinolate biosynthesis. Converts S-(alkylacetohydroximoyl)-L-cysteine to thiohydroximate. Functions in auxin homeostasis. Probably required for glucosinolate activation in response to pathogens. This is S-alkyl-thiohydroximate lyase SUR1 (SUR1) from Arabidopsis thaliana (Mouse-ear cress).